The primary structure comprises 497 residues: Intermediate filament protein A (497 aa).

The segment at 1 to 32 (MSDLNDRLASYIEKVRFLEAQNRKLAADLDLL) is coil 1A. Residues 1–342 (MSDLNDRLAS…KMLEGEENRA (342 aa)) enclose the IF rod domain. The segment at 33–46 (RGRWGKDTLSVRAM) is linker 1. Positions 47-184 (YEGELQEARK…RVHDQEIAEL (138 aa)) are coil 1B. The linker 12 stretch occupies residues 185-202 (QAMASRDTTPENREYFKN). The coil 2 stretch occupies residues 203 to 342 (ELASAIRDIR…KMLEGEENRA (140 aa)). Positions 343–497 (GLRQLVEQVV…THIQRSSHTI (155 aa)) are tail. The 119-residue stretch at 375–493 (SRTSFQRSAK…EERATHIQRS (119 aa)) folds into the LTD domain.

It belongs to the intermediate filament family. In terms of assembly, a and B can form homopolymers. As to expression, giant body muscle cells.

The protein localises to the cytoplasm. The chain is Intermediate filament protein A from Ascaris suum (Pig roundworm).